The chain runs to 260 residues: Small ribosomal subunit protein eS1 (260 aa).

The span at 1–18 (MAVGKNKRISKGKKGGKK) shows a compositional bias: basic residues. Positions 1-22 (MAVGKNKRISKGKKGGKKKAAD) are disordered.

The protein belongs to the eukaryotic ribosomal protein eS1 family. As to quaternary structure, component of the small ribosomal subunit. Mature ribosomes consist of a small (40S) and a large (60S) subunit. The 40S subunit contains about 33 different proteins and 1 molecule of RNA (18S). The 60S subunit contains about 49 different proteins and 3 molecules of RNA (25S, 5.8S and 5S).

It localises to the cytoplasm. The chain is Small ribosomal subunit protein eS1 from Helianthus annuus (Common sunflower).